The chain runs to 217 residues: uncharacterized protein (217 aa).

This is an uncharacterized protein from Methanocaldococcus jannaschii (strain ATCC 43067 / DSM 2661 / JAL-1 / JCM 10045 / NBRC 100440) (Methanococcus jannaschii).